The sequence spans 722 residues: Zinc finger BED domain-containing protein RICESLEEPER 1 (722 aa).

Residues 66–126 (RKKSLVWEHF…GSCPKIKNQE (61 aa)) form a BED-type zinc finger. Zn(2+) is bound by residues Cys-89, Cys-92, His-113, and Cys-119. The interval 572–592 (VEQGGGNNAPASENSTQATAP) is disordered. Residues 580–592 (APASENSTQATAP) are compositionally biased toward polar residues. An HATC (Hobo-Ac-Tam3) domain region spans residues 617–702 (ELEQYLDESL…EALVCAKDWL (86 aa)).

As to quaternary structure, homodimer.

It localises to the nucleus. In terms of biological role, transposase-like protein that is essential for plant growth and development. May regulate global gene expression by recruiting other cellular factors. The protein is Zinc finger BED domain-containing protein RICESLEEPER 1 of Oryza sativa subsp. japonica (Rice).